The chain runs to 201 residues: Large ribosomal subunit protein uL4 (201 aa).

The tract at residues 45-72 (AQKTRAEVTGSGKKPWRQKGTGRARAGS) is disordered.

The protein belongs to the universal ribosomal protein uL4 family. Part of the 50S ribosomal subunit.

Functionally, one of the primary rRNA binding proteins, this protein initially binds near the 5'-end of the 23S rRNA. It is important during the early stages of 50S assembly. It makes multiple contacts with different domains of the 23S rRNA in the assembled 50S subunit and ribosome. Forms part of the polypeptide exit tunnel. In Shewanella frigidimarina (strain NCIMB 400), this protein is Large ribosomal subunit protein uL4.